The chain runs to 89 residues: Small ribosomal subunit protein uS15 (89 aa).

This sequence belongs to the universal ribosomal protein uS15 family. Part of the 30S ribosomal subunit. Forms a bridge to the 50S subunit in the 70S ribosome, contacting the 23S rRNA.

Functionally, one of the primary rRNA binding proteins, it binds directly to 16S rRNA where it helps nucleate assembly of the platform of the 30S subunit by binding and bridging several RNA helices of the 16S rRNA. Forms an intersubunit bridge (bridge B4) with the 23S rRNA of the 50S subunit in the ribosome. The chain is Small ribosomal subunit protein uS15 from Rhodospirillum centenum (strain ATCC 51521 / SW).